The primary structure comprises 201 residues: MSSNLYLKRMASKLYFKITNKDECHHGFQYEDGLNILDNEFNDNPKDSCVPGRLYFTEIHHMHKYLEFGIYLREVYLPIDNPSFRMIRDSSGDKYGANMIVLGIKRDLRDKKTWEYLVSKGINLYENNALNWASKYGFLEIVKLIMENKINCYFGKAKKAYQLAITYGHTDVVDFLKTYVNTNSDYNFVLRGNDMVIYFKC.

2 ANK repeats span residues 125-154 (YENN…NCYF) and 156-188 (KAKK…DYNF).

In Acanthamoeba polyphaga (Amoeba), this protein is Putative ankyrin repeat protein R868.